A 265-amino-acid polypeptide reads, in one-letter code: Histone H1 (265 aa).

Low complexity predominate over residues 1 to 27 (MATEEPIVAVETVPEPIVTEPTTITEP). Disordered regions lie at residues 1–66 (MATE…PTYE), 131–226 (AAKK…TTPG), and 242–265 (VKSVKAKSVKSPVKKVSVKRGGRK). The segment covering 29–42 (VPEKEEPKAEVEKT) has biased composition (basic and acidic residues). Residues 43–55 (KKAKGSKPKKASK) show a composition bias toward basic residues. Residues 61–130 (SHPTYEEMIK…KVKGSFKLSA (70 aa)) enclose the H15 domain. The segment covering 140–171 (PKAKTAAKAKSVKAKPAAKPKAKAVVKPKVAS) has biased composition (basic residues). Positions 186 to 202 (KPKTVAAKTKPTAAKPK) are enriched in low complexity. Residues 203–215 (AVVKPKSKVKPAK) show a composition bias toward basic residues. Low complexity predominate over residues 216 to 226 (VAKTSVKTTPG).

The protein belongs to the histone H1/H5 family.

The protein localises to the nucleus. It is found in the chromosome. Functionally, histones H1 are necessary for the condensation of nucleosome chains into higher-order structures. This is Histone H1 from Pisum sativum (Garden pea).